A 481-amino-acid polypeptide reads, in one-letter code: Inosine-5'-monophosphate dehydrogenase (481 aa).

CBS domains lie at 92 to 148 and 152 to 209; these read VIND…SKKV and MTKM…PEAN. NAD(+) is bound by residues aspartate 244 and 293–295; that span reads GIG. The K(+) site is built by glycine 295 and glycine 297. Serine 298 is an IMP binding site. Cysteine 300 contacts K(+). Cysteine 300 functions as the Thioimidate intermediate in the catalytic mechanism. Residues 333-335, 356-357, and 380-384 each bind IMP; these read DGG, GS, and YRGMG. Arginine 396 functions as the Proton acceptor in the catalytic mechanism. Glutamate 410 lines the IMP pocket. Positions 464, 465, and 466 each coordinate K(+).

Belongs to the IMPDH/GMPR family. In terms of assembly, homotetramer. K(+) serves as cofactor.

The enzyme catalyses IMP + NAD(+) + H2O = XMP + NADH + H(+). It functions in the pathway purine metabolism; XMP biosynthesis via de novo pathway; XMP from IMP: step 1/1. With respect to regulation, mycophenolic acid (MPA) is a non-competitive inhibitor that prevents formation of the closed enzyme conformation by binding to the same site as the amobile flap. In contrast, mizoribine monophosphate (MZP) is a competitive inhibitor that induces the closed conformation. MPA is a potent inhibitor of mammalian IMPDHs but a poor inhibitor of the bacterial enzymes. MZP is a more potent inhibitor of bacterial IMPDH. Functionally, catalyzes the conversion of inosine 5'-phosphate (IMP) to xanthosine 5'-phosphate (XMP), the first committed and rate-limiting step in the de novo synthesis of guanine nucleotides, and therefore plays an important role in the regulation of cell growth. In Helicobacter pylori (strain ATCC 700392 / 26695) (Campylobacter pylori), this protein is Inosine-5'-monophosphate dehydrogenase.